Here is an 89-residue protein sequence, read N- to C-terminus: Small ribosomal subunit protein uS15 (89 aa).

It belongs to the universal ribosomal protein uS15 family. As to quaternary structure, part of the 30S ribosomal subunit. Forms a bridge to the 50S subunit in the 70S ribosome, contacting the 23S rRNA.

Its function is as follows. One of the primary rRNA binding proteins, it binds directly to 16S rRNA where it helps nucleate assembly of the platform of the 30S subunit by binding and bridging several RNA helices of the 16S rRNA. Functionally, forms an intersubunit bridge (bridge B4) with the 23S rRNA of the 50S subunit in the ribosome. The protein is Small ribosomal subunit protein uS15 of Granulibacter bethesdensis (strain ATCC BAA-1260 / CGDNIH1).